The sequence spans 213 residues: Orotate phosphoribosyltransferase (213 aa).

Lysine 26 contributes to the 5-phospho-alpha-D-ribose 1-diphosphate binding site. An orotate-binding site is contributed by 34-35; it reads FF. 5-phospho-alpha-D-ribose 1-diphosphate is bound by residues 72–73, arginine 99, lysine 100, lysine 103, histidine 105, and 124–132; these read YK and DDVITAGTA. The orotate site is built by threonine 128 and arginine 156.

The protein belongs to the purine/pyrimidine phosphoribosyltransferase family. PyrE subfamily. Homodimer. It depends on Mg(2+) as a cofactor.

It carries out the reaction orotidine 5'-phosphate + diphosphate = orotate + 5-phospho-alpha-D-ribose 1-diphosphate. It participates in pyrimidine metabolism; UMP biosynthesis via de novo pathway; UMP from orotate: step 1/2. Its function is as follows. Catalyzes the transfer of a ribosyl phosphate group from 5-phosphoribose 1-diphosphate to orotate, leading to the formation of orotidine monophosphate (OMP). The polypeptide is Orotate phosphoribosyltransferase (Shigella flexneri serotype 5b (strain 8401)).